The sequence spans 429 residues: Histidine--tRNA ligase (429 aa).

Belongs to the class-II aminoacyl-tRNA synthetase family. In terms of assembly, homodimer.

It localises to the cytoplasm. The catalysed reaction is tRNA(His) + L-histidine + ATP = L-histidyl-tRNA(His) + AMP + diphosphate + H(+). The protein is Histidine--tRNA ligase of Pseudomonas aeruginosa (strain UCBPP-PA14).